A 377-amino-acid polypeptide reads, in one-letter code: Protein RecA (377 aa).

An ATP-binding site is contributed by 65 to 72 (GPESSGKT). A disordered region spans residues 329–377 (GDEEAAATKATETKTDAPKDKDKGKTKAKDKPADVTPGQIELAPDKSAK). A compositionally biased stretch (basic and acidic residues) spans 339 to 361 (TETKTDAPKDKDKGKTKAKDKPA).

It belongs to the RecA family.

Its subcellular location is the cytoplasm. In terms of biological role, can catalyze the hydrolysis of ATP in the presence of single-stranded DNA, the ATP-dependent uptake of single-stranded DNA by duplex DNA, and the ATP-dependent hybridization of homologous single-stranded DNAs. It interacts with LexA causing its activation and leading to its autocatalytic cleavage. The sequence is that of Protein RecA from Levilactobacillus brevis (strain ATCC 367 / BCRC 12310 / CIP 105137 / JCM 1170 / LMG 11437 / NCIMB 947 / NCTC 947) (Lactobacillus brevis).